A 452-amino-acid polypeptide reads, in one-letter code: Glutamyl-tRNA(Gln) amidotransferase subunit A (452 aa).

Residues Lys56 and Ser131 each act as charge relay system in the active site. The active-site Acyl-ester intermediate is the Ser155.

It belongs to the amidase family. GatA subfamily. Heterotrimer of A, B and C subunits.

The catalysed reaction is L-glutamyl-tRNA(Gln) + L-glutamine + ATP + H2O = L-glutaminyl-tRNA(Gln) + L-glutamate + ADP + phosphate + H(+). Functionally, allows the formation of correctly charged Gln-tRNA(Gln) through the transamidation of misacylated Glu-tRNA(Gln) in organisms which lack glutaminyl-tRNA synthetase. The reaction takes place in the presence of glutamine and ATP through an activated gamma-phospho-Glu-tRNA(Gln). The chain is Glutamyl-tRNA(Gln) amidotransferase subunit A from Campylobacter concisus (strain 13826).